Consider the following 371-residue polypeptide: MRFYSVLLTIVTLIASTYDAKVNASGIQAIAVSSISHDAPAARMLRADHADERGISVPSASKIVEWMLSPKVAKELTFLENRKVQKWVDKQKTQEYVFTKLGLNSGLDKALSNPKLHVYAAYIDRFNVKNPSNKVALLDKFSEKYTDEGVAKMVEMGIRSSNLETENFASRLWRELLNKWMDNAESAEGVFKILKLDEVGGGIFVTPLFNTWYAFIKEGYTRQAEDVVLRVLSDRYGYDGLSRIFFRGQRNFDLVGDLPIKLETRMVNNWLNKDVSPDKVFKLLKLDEGLDKLLTNSNMQVWESYMMKYNLMPDVEPTTMMQTITRFYNFKELSSMLENAKMVPELNKVAERWQHELRVHYLRAPKMKKEG.

Residues 1–24 (MRFYSVLLTIVTLIASTYDAKVNA) form the signal peptide. Positions 43 to 53 (RMLRADHADER) match the RxLR-dEER motif.

It belongs to the RxLR effector family.

It localises to the secreted. Its subcellular location is the host nucleus. The protein resides in the host cytoplasm. Its function is as follows. Effector that enhances P.infestans colonization of Nicotiana benthamiana leaves. This Phytophthora infestans (strain T30-4) (Potato late blight agent) protein is RxLR effector protein PITG_12731.